A 229-amino-acid chain; its full sequence is Germin-like protein 12-2 (229 aa).

The signal sequence occupies residues 1–22; it reads MASSNFFLLTALIALVATQAMA. A disulfide bridge links Cys32 with Cys47. A Cupin type-1 domain is found at 62–217; it reads ANLDKPMDTT…AFQVDKKAVD (156 aa). An N-linked (GlcNAc...) asparagine glycan is attached at Asn78. Mn(2+)-binding residues include His111, His113, Glu118, and His162.

This sequence belongs to the germin family. As to quaternary structure, oligomer (believed to be a pentamer but probably hexamer).

Its subcellular location is the secreted. It is found in the extracellular space. It localises to the apoplast. Its function is as follows. May play a role in plant defense. Probably has no oxalate oxidase activity even if the active site is conserved. The sequence is that of Germin-like protein 12-2 from Oryza sativa subsp. japonica (Rice).